The following is a 117-amino-acid chain: Large ribosomal subunit protein bL17 (117 aa).

Belongs to the bacterial ribosomal protein bL17 family. Part of the 50S ribosomal subunit. Contacts protein L32.

This chain is Large ribosomal subunit protein bL17, found in Neorickettsia sennetsu (strain ATCC VR-367 / Miyayama) (Ehrlichia sennetsu).